The following is a 504-amino-acid chain: Maturase K (504 aa).

This sequence belongs to the intron maturase 2 family. MatK subfamily.

The protein resides in the plastid. The protein localises to the chloroplast. In terms of biological role, usually encoded in the trnK tRNA gene intron. Probably assists in splicing its own and other chloroplast group II introns. The protein is Maturase K of Quercus suber (Cork oak).